The primary structure comprises 314 residues: NAC domain-containing protein 10 (314 aa).

Polar residues predominate over residues 18 to 39 (VSNTDHPSVQLKDQSQSCVTSR). Disordered regions lie at residues 18–48 (VSNT…SAET) and 150–182 (YTTG…PVLS). An NAC domain is found at 77–236 (LPAGVKFDPS…EPVLSKVFYQ (160 aa)). Over residues 160–171 (VSTDEEGHETRW) the composition is skewed to basic and acidic residues. The DNA-binding element occupies 187–242 (TGFKKILVLYTNYGRQKKPEKTNWVMHQYHLGSSEDEKDGEPVLSKVFYQTQPRQC).

Expressed in protoxylem and elongating interfascicular fiber cells of elongating internodes, developing metaxylem cells and interfascicular fibers of non-elongating internodes and developing secondary xylem of roots.

The protein resides in the nucleus. Functionally, transcriptional activator that plays a regulatory role in the development of secondary cell wall fibers. Is a direct target of SND1. This chain is NAC domain-containing protein 10, found in Arabidopsis thaliana (Mouse-ear cress).